A 351-amino-acid chain; its full sequence is Anthranilate phosphoribosyltransferase (351 aa).

Residues G80, 83 to 84, T88, 90 to 93, 108 to 116, and S120 each bind 5-phospho-alpha-D-ribose 1-diphosphate; these read GD, NVST, and KHGNRSVTS. Position 80 (G80) interacts with anthranilate. A Mg(2+)-binding site is contributed by S92. Residue N111 participates in anthranilate binding. Residue R166 participates in anthranilate binding. D229 and E230 together coordinate Mg(2+).

Belongs to the anthranilate phosphoribosyltransferase family. In terms of assembly, homodimer. The cofactor is Mg(2+).

The catalysed reaction is N-(5-phospho-beta-D-ribosyl)anthranilate + diphosphate = 5-phospho-alpha-D-ribose 1-diphosphate + anthranilate. It participates in amino-acid biosynthesis; L-tryptophan biosynthesis; L-tryptophan from chorismate: step 2/5. Functionally, catalyzes the transfer of the phosphoribosyl group of 5-phosphorylribose-1-pyrophosphate (PRPP) to anthranilate to yield N-(5'-phosphoribosyl)-anthranilate (PRA). The chain is Anthranilate phosphoribosyltransferase from Prosthecochloris aestuarii (strain DSM 271 / SK 413).